The sequence spans 473 residues: Ribulose bisphosphate carboxylase large chain (473 aa).

Substrate contacts are provided by Asn116 and Thr166. Catalysis depends on Lys168, which acts as the Proton acceptor. Lys170 contacts substrate. Residues Lys194, Asp196, and Glu197 each coordinate Mg(2+). N6-carboxylysine is present on Lys194. Catalysis depends on His287, which acts as the Proton acceptor. Arg288, His320, and Ser372 together coordinate substrate.

It belongs to the RuBisCO large chain family. Type I subfamily. As to quaternary structure, heterohexadecamer of 8 large chains and 8 small chains. It depends on Mg(2+) as a cofactor.

It catalyses the reaction 2 (2R)-3-phosphoglycerate + 2 H(+) = D-ribulose 1,5-bisphosphate + CO2 + H2O. The enzyme catalyses D-ribulose 1,5-bisphosphate + O2 = 2-phosphoglycolate + (2R)-3-phosphoglycerate + 2 H(+). RuBisCO catalyzes two reactions: the carboxylation of D-ribulose 1,5-bisphosphate, the primary event in carbon dioxide fixation, as well as the oxidative fragmentation of the pentose substrate. Both reactions occur simultaneously and in competition at the same active site. This chain is Ribulose bisphosphate carboxylase large chain, found in Thiomonas intermedia (strain K12) (Thiobacillus intermedius).